Here is a 717-residue protein sequence, read N- to C-terminus: uncharacterized protein (717 aa).

A helical membrane pass occupies residues 19-38; that stretch reads VFLSTIFVSIIFCLGILFLV.

It to E.coli YtfN.

It is found in the membrane. This is an uncharacterized protein from Buchnera aphidicola subsp. Baizongia pistaciae (strain Bp).